The chain runs to 672 residues: Hydroxyproline O-galactosyltransferase GALT5 (672 aa).

The Cytoplasmic portion of the chain corresponds to 1–28 (MKKPKLSKVEKIDKIDLFSSLWKQRSVR). A helical; Signal-anchor for type II membrane protein transmembrane segment spans residues 29–49 (VIMAIGFLYLVIVSVEIPLVF). The Lumenal segment spans residues 50–672 (KSWSSSSVPL…QNKPECCNMR (623 aa)). A Galectin domain is found at 191-392 (KLMELPCGLT…DIDVHSVFVA (202 aa)). N-linked (GlcNAc...) asparagine glycosylation is found at N306 and N620.

Belongs to the glycosyltransferase 31 family. Mn(2+) is required as a cofactor. In terms of tissue distribution, expressed in juvenile leaves, stems, cauline leaves and siliques.

It is found in the golgi apparatus membrane. The protein operates within protein modification; protein glycosylation. In terms of biological role, possesses hydroxyproline O-galactosyltransferase activity. Transfers galactose from UDP-galactose to hydroxyproline residues in the arabinogalactan proteins (AGPs). Is specific for AGPs containing non-contiguous peptidyl hydroxyproline residues. Utilizes UDP-galactose solely as sugar donor. The addition of galactose onto the peptidyl hydroxyproline residues in AGP core proteins represents the first committed step in arabinogalactan polysaccharide addition. AGP glycans play essential roles in both vegetative and reproductive plant growth. In Arabidopsis thaliana (Mouse-ear cress), this protein is Hydroxyproline O-galactosyltransferase GALT5.